A 5101-amino-acid chain; its full sequence is Malformin synthetase mlfA (5101 aa).

The adenylation 1 stretch occupies residues 225 to 616 (ERHAANRPHS…CGRADTQVKL (392 aa)). One can recognise a Carrier 1 domain in the interval 757-830 (SRLEQKIQLA…EAASLAEVQE (74 aa)). S791 carries the post-translational modification O-(pantetheine 4'-phosphoryl)serine. A condensation 1 region spans residues 868–1299 (EDVFPCTTMQ…ALNTLSLLQA (432 aa)). Positions 1327–1716 (DRWVTRQPEG…GRKDTQVKLR (390 aa)) are adenylation 2. One can recognise a Carrier 2 domain in the interval 1854-1931 (TPTLELERTL…QLAAEVGEPA (78 aa)). Position 1891 is an O-(pantetheine 4'-phosphoryl)serine (S1891). Disordered regions lie at residues 1932–1961 (GQSASSASSTTEEGFTFSTPDDSSTNDGVD) and 1994–2020 (GGSSSNKTPSVSSSSSSSSSSKRKKNA). Low complexity-rich tracts occupy residues 1934 to 1958 (SASSASSTTEEGFTFSTPDDSSTND) and 1996 to 2013 (SSSNKTPSVSSSSSSSSS). The segment at 2066–2481 (EDIYPATALQ…AVSCSDKETL (416 aa)) is condensation 2. Residues 2504–2896 (RRTPHAPAVC…IGRRDGQLKL (393 aa)) are adenylation 3. One can recognise a Carrier 3 domain in the interval 3032–3108 (RPVTSQEHEM…QLICHLNTIR (77 aa)). O-(pantetheine 4'-phosphoryl)serine is present on S3069. 2 condensation regions span residues 3125–3590 (WVAL…TYDQ) and 3611–4030 (NIYP…EHLV). The adenylation 4 stretch occupies residues 4055–4445 (HNSRQAVCAW…VGRKDNQIKF (391 aa)). A Carrier 4 domain is found at 4579 to 4655 (MPSTAAERKM…DLSDQAKSLI (77 aa)). Position 4616 is an O-(pantetheine 4'-phosphoryl)serine (S4616). Residues 4712–5097 (IVVDIPGPID…KIVGLLRHPE (386 aa)) are condensation 5.

It belongs to the NRP synthetase family.

It functions in the pathway secondary metabolite biosynthesis. Its function is as follows. Nonribosomal peptide synthetase; part of the gene cluster that mediates the biosynthesis of malformins, cyclic pentapeptides with a disulfide bond between 2 consecutive cysteins, that show potential anti-tumor as well as antimalarial and antitrypanosomal properties. The nonribosomal peptide synthetase mlfA is responsible of the formation of the cyclic pentapeptide. The malformin biosynthesis clusters in malformin-producing fungi also contain enzymes involved in the formation of the disulfide bond between the two consecutive cysteins within malformins, in addition to additional tailoring enzymes such as methyltransferases or oxidoreductases. They are also composed of up to 4 major facilitator superfamily transporters, and transcription factors probably involved in the regulation of the expression of those clusters. The polypeptide is Malformin synthetase mlfA (Aspergillus kawachii (strain NBRC 4308) (White koji mold)).